The primary structure comprises 211 residues: Large ribosomal subunit protein bL25 (211 aa).

This sequence belongs to the bacterial ribosomal protein bL25 family. CTC subfamily. Part of the 50S ribosomal subunit; part of the 5S rRNA/L5/L18/L25 subcomplex. Contacts the 5S rRNA. Binds to the 5S rRNA independently of L5 and L18.

Its function is as follows. This is one of the proteins that binds to the 5S RNA in the ribosome where it forms part of the central protuberance. This Anaplasma phagocytophilum (strain HZ) protein is Large ribosomal subunit protein bL25.